The primary structure comprises 621 residues: 2-hydroxyacyl-CoA lyase 2 (621 aa).

The helical transmembrane segment at 7 to 29 (LGCSLGAALGGVIFASYKLGLLY) threads the bilayer. E87 serves as a coordination point for thiamine diphosphate. The tract at residues 459 to 539 (DFVGSAAYIM…VIALVGNDAC (81 aa)) is thiamine pyrophosphate binding. Mg(2+) contacts are provided by D510 and N536.

It belongs to the TPP enzyme family. Requires Mg(2+) as cofactor. Thiamine diphosphate serves as cofactor.

It is found in the endoplasmic reticulum membrane. It catalyses the reaction 2-hydroxyoctadecanoyl-CoA = heptadecanal + formyl-CoA. The enzyme catalyses (2R)-hydroxyhexadecanoyl-CoA = pentadecanal + formyl-CoA. Its function is as follows. Endoplasmic reticulum 2-OH acyl-CoA lyase involved in the cleavage (C1 removal) reaction in the fatty acid alpha-oxydation in a thiamine pyrophosphate (TPP)-dependent manner. In Danio rerio (Zebrafish), this protein is 2-hydroxyacyl-CoA lyase 2 (ilvbl).